Here is a 222-residue protein sequence, read N- to C-terminus: Triosephosphate isomerase (222 aa).

9-11 (NLK) is a binding site for substrate. H93 serves as the catalytic Electrophile. The active-site Proton acceptor is the E141. Residues I146, G181, and 202–203 (AS) contribute to the substrate site.

This sequence belongs to the triosephosphate isomerase family. In terms of assembly, homotetramer; dimer of dimers.

It is found in the cytoplasm. The catalysed reaction is D-glyceraldehyde 3-phosphate = dihydroxyacetone phosphate. The protein operates within carbohydrate biosynthesis; gluconeogenesis. It participates in carbohydrate degradation; glycolysis; D-glyceraldehyde 3-phosphate from glycerone phosphate: step 1/1. In terms of biological role, involved in the gluconeogenesis. Catalyzes stereospecifically the conversion of dihydroxyacetone phosphate (DHAP) to D-glyceraldehyde-3-phosphate (G3P). This chain is Triosephosphate isomerase, found in Methanoculleus marisnigri (strain ATCC 35101 / DSM 1498 / JR1).